A 561-amino-acid chain; its full sequence is Putative transport protein YbjL (561 aa).

Transmembrane regions (helical) follow at residues 8 to 28 (LLNG…LCLG), 32 to 52 (LGSI…LLGQ), 66 to 86 (FMLF…SIFF), 94 to 114 (MLAL…GKLF), and 158 to 178 (NLSL…IVGA). RCK C-terminal domains follow at residues 200–288 (RGLD…SFRN) and 292–373 (VFDR…RIGF). A run of 5 helical transmembrane segments spans residues 383–403 (LLAF…TFQF), 406–426 (FSFG…LGFM), 451–471 (VFMA…LGAI), 475–495 (MLIA…LFGA), and 540–560 (AIAN…WPGL).

Belongs to the AAE transporter (TC 2.A.81) family. YbjL subfamily.

Its subcellular location is the cell membrane. The chain is Putative transport protein YbjL from Escherichia coli O139:H28 (strain E24377A / ETEC).